Here is a 318-residue protein sequence, read N- to C-terminus: Transaldolase (318 aa).

Catalysis depends on lysine 131, which acts as the Schiff-base intermediate with substrate.

This sequence belongs to the transaldolase family. Type 1 subfamily. In terms of assembly, homodimer.

It is found in the cytoplasm. It catalyses the reaction D-sedoheptulose 7-phosphate + D-glyceraldehyde 3-phosphate = D-erythrose 4-phosphate + beta-D-fructose 6-phosphate. It participates in carbohydrate degradation; pentose phosphate pathway; D-glyceraldehyde 3-phosphate and beta-D-fructose 6-phosphate from D-ribose 5-phosphate and D-xylulose 5-phosphate (non-oxidative stage): step 2/3. Functionally, transaldolase is important for the balance of metabolites in the pentose-phosphate pathway. This chain is Transaldolase, found in Cellvibrio japonicus (strain Ueda107) (Pseudomonas fluorescens subsp. cellulosa).